A 358-amino-acid chain; its full sequence is 3-dehydroquinate synthase (358 aa).

Residues 70–75 (DGEQYK), 104–108 (GVIGD), 128–129 (TT), Lys-141, Lys-150, and 168–171 (CLHT) each bind NAD(+). Residues Glu-183, His-246, and His-263 each coordinate Zn(2+).

This sequence belongs to the sugar phosphate cyclases superfamily. Dehydroquinate synthase family. Requires Co(2+) as cofactor. Zn(2+) is required as a cofactor. It depends on NAD(+) as a cofactor.

The protein resides in the cytoplasm. It carries out the reaction 7-phospho-2-dehydro-3-deoxy-D-arabino-heptonate = 3-dehydroquinate + phosphate. It functions in the pathway metabolic intermediate biosynthesis; chorismate biosynthesis; chorismate from D-erythrose 4-phosphate and phosphoenolpyruvate: step 2/7. Functionally, catalyzes the conversion of 3-deoxy-D-arabino-heptulosonate 7-phosphate (DAHP) to dehydroquinate (DHQ). The sequence is that of 3-dehydroquinate synthase from Shewanella loihica (strain ATCC BAA-1088 / PV-4).